The chain runs to 573 residues: 2-succinyl-5-enolpyruvyl-6-hydroxy-3-cyclohexene-1-carboxylate synthase (573 aa).

This sequence belongs to the TPP enzyme family. MenD subfamily. Homodimer. It depends on Mg(2+) as a cofactor. Requires Mn(2+) as cofactor. The cofactor is thiamine diphosphate.

It catalyses the reaction isochorismate + 2-oxoglutarate + H(+) = 5-enolpyruvoyl-6-hydroxy-2-succinyl-cyclohex-3-ene-1-carboxylate + CO2. Its pathway is quinol/quinone metabolism; 1,4-dihydroxy-2-naphthoate biosynthesis; 1,4-dihydroxy-2-naphthoate from chorismate: step 2/7. The protein operates within quinol/quinone metabolism; menaquinone biosynthesis. Its function is as follows. Catalyzes the thiamine diphosphate-dependent decarboxylation of 2-oxoglutarate and the subsequent addition of the resulting succinic semialdehyde-thiamine pyrophosphate anion to isochorismate to yield 2-succinyl-5-enolpyruvyl-6-hydroxy-3-cyclohexene-1-carboxylate (SEPHCHC). This Shewanella putrefaciens (strain CN-32 / ATCC BAA-453) protein is 2-succinyl-5-enolpyruvyl-6-hydroxy-3-cyclohexene-1-carboxylate synthase.